Reading from the N-terminus, the 40-residue chain is MADTTGRIPLWIIGTVAGIPVIGLIGIFFYGSYSGLGSSL.

A helical membrane pass occupies residues 8–28; the sequence is IPLWIIGTVAGIPVIGLIGIF.

Belongs to the PsbJ family. In terms of assembly, PSII is composed of 1 copy each of membrane proteins PsbA, PsbB, PsbC, PsbD, PsbE, PsbF, PsbH, PsbI, PsbJ, PsbK, PsbL, PsbM, PsbT, PsbX, PsbY, PsbZ, Psb30/Ycf12, at least 3 peripheral proteins of the oxygen-evolving complex and a large number of cofactors. It forms dimeric complexes.

Its subcellular location is the plastid. It is found in the chloroplast thylakoid membrane. In terms of biological role, one of the components of the core complex of photosystem II (PSII). PSII is a light-driven water:plastoquinone oxidoreductase that uses light energy to abstract electrons from H(2)O, generating O(2) and a proton gradient subsequently used for ATP formation. It consists of a core antenna complex that captures photons, and an electron transfer chain that converts photonic excitation into a charge separation. The polypeptide is Photosystem II reaction center protein J (Pelargonium hortorum (Common geranium)).